The primary structure comprises 323 residues: MSLQSQVSGRLAQLRAAGQLLVSLRPWPGRSAGGPRPRGSACGPLVALGEHGYCAWLSAGVGAWGAAGRGAWVRTWAPLAMAAKVDLSTSTDWKEAKSFLKGLSDKQREEHYFCKDFIKLKKIPTWKETAKGLAVKVEDPKYKKDKQLNEKISLYRGDITKLEVDAIVNAANSSLLGGGGVDGCIHRAAGSLLTDECRTLQNCETGKAKITCGYRLPAKYVIHTVGPIAVGQPTASQAAELRSCYLSSLDLLLEHRLRSVAFPCISTGVFGYPNEEAAEVVLASLREWLEQHKDKVDRLIICVFLEKDEGIYRERLPHYFPVA.

N6-succinyllysine occurs at positions 94, 101, and 127. K136 participates in a covalent cross-link: Glycyl lysine isopeptide (Lys-Gly) (interchain with G-Cter in SUMO2). In terms of domain architecture, Macro spans 139 to 320 (DPKYKKDKQL…IYRERLPHYF (182 aa)). Residue 157–159 (GDI) participates in substrate binding. K161 is modified (N6-acetyllysine). Substrate-binding positions include 170–172 (AAN), 177–182 (GGGGVD), 265–271 (ISTGVFG), and F304.

It belongs to the MacroD-type family. MacroD1/2-like subfamily. In terms of assembly, interacts with ESR1; Interacts in a manner that is estrogen independent but is enhanced by estrogen. Interacts (via macro domain) with AR.

The protein resides in the nucleus. It catalyses the reaction 3''-O-acetyl-ADP-D-ribose + H2O = ADP-D-ribose + acetate + H(+). The enzyme catalyses 2''-O-acetyl-ADP-D-ribose + H2O = ADP-D-ribose + acetate + H(+). It carries out the reaction 4-O-(ADP-D-ribosyl)-L-aspartyl-[protein] + H2O = L-aspartyl-[protein] + ADP-D-ribose + H(+). The catalysed reaction is 5-O-(ADP-D-ribosyl)-L-glutamyl-[protein] + H2O = L-glutamyl-[protein] + ADP-D-ribose + H(+). It catalyses the reaction alpha-NAD(+) + H2O = ADP-D-ribose + nicotinamide + H(+). Its activity is regulated as follows. Subject to competitive inhibition by the product ADP-ribose. Removes ADP-ribose from aspartate and glutamate residues in proteins bearing a single ADP-ribose moiety. Inactive towards proteins bearing poly-ADP-ribose. Deacetylates O-acetyl-ADP ribose, a signaling molecule generated by the deacetylation of acetylated lysine residues in histones and other proteins. Plays a role in estrogen signaling. Binds to androgen receptor (AR) and amplifies the transactivation function of AR in response to androgen. May play an important role in carcinogenesis and/or progression of hormone-dependent cancers by feed-forward mechanism that activates ESR1 transactivation. Could be an ESR1 coactivator, providing a positive feedback regulatory loop for ESR1 signal transduction. Could be involved in invasive growth by down-regulating CDH1 in endometrial cancer cells. Enhances ESR1-mediated transcription activity. The sequence is that of ADP-ribose glycohydrolase MACROD1 from Mus musculus (Mouse).